A 238-amino-acid chain; its full sequence is Purine nucleoside phosphorylase DeoD-type (238 aa).

H5 lines the a purine D-ribonucleoside pocket. Phosphate-binding positions include G21, R25, R44, and R88–S91. A purine D-ribonucleoside contacts are provided by residues E180–E182 and S204–D205. D205 serves as the catalytic Proton donor.

Belongs to the PNP/UDP phosphorylase family. As to quaternary structure, homohexamer; trimer of homodimers.

It carries out the reaction a purine D-ribonucleoside + phosphate = a purine nucleobase + alpha-D-ribose 1-phosphate. It catalyses the reaction a purine 2'-deoxy-D-ribonucleoside + phosphate = a purine nucleobase + 2-deoxy-alpha-D-ribose 1-phosphate. In terms of biological role, catalyzes the reversible phosphorolytic breakdown of the N-glycosidic bond in the beta-(deoxy)ribonucleoside molecules, with the formation of the corresponding free purine bases and pentose-1-phosphate. The chain is Purine nucleoside phosphorylase DeoD-type from Xenorhabdus nematophila (strain ATCC 19061 / DSM 3370 / CCUG 14189 / LMG 1036 / NCIMB 9965 / AN6).